Here is a 581-residue protein sequence, read N- to C-terminus: Tetratricopeptide repeat and J domain-containing co-chaperone DNJ1 (581 aa).

An N-terminal signal peptide occupies residues 1 to 19 (MKATLLPSLLALSLTLCLA). 7 TPR repeats span residues 48 to 81 (ASQHLTQANVALQSGRYQDALSAFDLALQADPSS), 82 to 115 (WLTYYRRATAQLSLGRTSAALQDFQSLLKLNPKF), 116 to 149 (DKAYLQQAKVYLKEGDCDKAKQALKTYDSIRAEK), 221 to 254 (LETRLVRARCQTMKGRIEDAMADWTRAVHLTPSP), 257 to 293 (LRRLSVLSYFVVSEPGSQSRDAGLQHLKACLHSDPDN), 378 to 411 (LELHTMYCKAYTELNDMDKAMPYCELVLAKDPDN), and 412 to 445 (VEATLARAELALQREDYDQAVRDLTKAFDASGRT). Asn-293 is a glycosylation site (N-linked (GlcNAc...) asparagine). Residues 467 to 528 (DYYKVLGVKR…ELRKKYDQGD (62 aa)) enclose the J domain. Positions 522–544 (KKYDQGDDPNDPMGGQQGGYGNP) are disordered.

Interacts with the ER chaperone BIP1.

The protein resides in the endoplasmic reticulum lumen. Its function is as follows. Endoplasmic reticulum (ER) protein that functions as a co-chaperone for BIP1 during ER stress. Might be specifically involved in the refolding of N-glycosylated proteins. This is Tetratricopeptide repeat and J domain-containing co-chaperone DNJ1 from Mycosarcoma maydis (Corn smut fungus).